A 156-amino-acid chain; its full sequence is 3-hydroxyacyl-[acyl-carrier-protein] dehydratase FabZ (156 aa).

Residue His-62 is part of the active site.

This sequence belongs to the thioester dehydratase family. FabZ subfamily.

It localises to the cytoplasm. The enzyme catalyses a (3R)-hydroxyacyl-[ACP] = a (2E)-enoyl-[ACP] + H2O. Functionally, involved in unsaturated fatty acids biosynthesis. Catalyzes the dehydration of short chain beta-hydroxyacyl-ACPs and long chain saturated and unsaturated beta-hydroxyacyl-ACPs. The chain is 3-hydroxyacyl-[acyl-carrier-protein] dehydratase FabZ from Parasynechococcus marenigrum (strain WH8102).